The chain runs to 338 residues: Ketol-acid reductoisomerase (NADP(+)) (338 aa).

Residues 1-181 enclose the KARI N-terminal Rossmann domain; it reads MKVFYDKDAD…GGGKAGIIET (181 aa). NADP(+) contacts are provided by residues 24–27, Arg47, and Ser52; that span reads YGSQ. The active site involves His107. Gly133 provides a ligand contact to NADP(+). In terms of domain architecture, KARI C-terminal knotted spans 182 to 327; the sequence is NFREETETDL…EKLRAMMPWI (146 aa). Residues Asp190, Glu194, Glu226, and Glu230 each coordinate Mg(2+). Substrate is bound at residue Ser251.

Belongs to the ketol-acid reductoisomerase family. It depends on Mg(2+) as a cofactor.

It catalyses the reaction (2R)-2,3-dihydroxy-3-methylbutanoate + NADP(+) = (2S)-2-acetolactate + NADPH + H(+). It carries out the reaction (2R,3R)-2,3-dihydroxy-3-methylpentanoate + NADP(+) = (S)-2-ethyl-2-hydroxy-3-oxobutanoate + NADPH + H(+). It participates in amino-acid biosynthesis; L-isoleucine biosynthesis; L-isoleucine from 2-oxobutanoate: step 2/4. It functions in the pathway amino-acid biosynthesis; L-valine biosynthesis; L-valine from pyruvate: step 2/4. Functionally, involved in the biosynthesis of branched-chain amino acids (BCAA). Catalyzes an alkyl-migration followed by a ketol-acid reduction of (S)-2-acetolactate (S2AL) to yield (R)-2,3-dihydroxy-isovalerate. In the isomerase reaction, S2AL is rearranged via a Mg-dependent methyl migration to produce 3-hydroxy-3-methyl-2-ketobutyrate (HMKB). In the reductase reaction, this 2-ketoacid undergoes a metal-dependent reduction by NADPH to yield (R)-2,3-dihydroxy-isovalerate. The sequence is that of Ketol-acid reductoisomerase (NADP(+)) from Leptothrix cholodnii (strain ATCC 51168 / LMG 8142 / SP-6) (Leptothrix discophora (strain SP-6)).